A 77-amino-acid chain; its full sequence is MADVMERVTKIIVDRLGVEESEVKLESSFKEDLKADSLDVVELVMELEDEFDMEIADEDAEKIATVKDVVDYINNNQ.

The Carrier domain maps to 2-77 (ADVMERVTKI…DVVDYINNNQ (76 aa)). Position 37 is an O-(pantetheine 4'-phosphoryl)serine (Ser37).

This sequence belongs to the acyl carrier protein (ACP) family. 4'-phosphopantetheine is transferred from CoA to a specific serine of apo-ACP by AcpS. This modification is essential for activity because fatty acids are bound in thioester linkage to the sulfhydryl of the prosthetic group.

The protein localises to the cytoplasm. It participates in lipid metabolism; fatty acid biosynthesis. Functionally, carrier of the growing fatty acid chain in fatty acid biosynthesis. This is Acyl carrier protein from Shouchella clausii (strain KSM-K16) (Alkalihalobacillus clausii).